A 239-amino-acid polypeptide reads, in one-letter code: Ribonuclease PH (239 aa).

Residues arginine 87 and 125–127 each bind phosphate; that span reads GTR.

Belongs to the RNase PH family. In terms of assembly, homohexameric ring arranged as a trimer of dimers.

It carries out the reaction tRNA(n+1) + phosphate = tRNA(n) + a ribonucleoside 5'-diphosphate. In terms of biological role, phosphorolytic 3'-5' exoribonuclease that plays an important role in tRNA 3'-end maturation. Removes nucleotide residues following the 3'-CCA terminus of tRNAs; can also add nucleotides to the ends of RNA molecules by using nucleoside diphosphates as substrates, but this may not be physiologically important. Probably plays a role in initiation of 16S rRNA degradation (leading to ribosome degradation) during starvation. The protein is Ribonuclease PH of Cellvibrio japonicus (strain Ueda107) (Pseudomonas fluorescens subsp. cellulosa).